Reading from the N-terminus, the 142-residue chain is FAD synthase (142 aa).

Residues 9-10 (TF), 14-17 (HPGH), and aspartate 92 contribute to the ATP site.

The protein belongs to the archaeal FAD synthase family. Homodimer. A divalent metal cation serves as cofactor.

The enzyme catalyses FMN + ATP + H(+) = FAD + diphosphate. It participates in cofactor biosynthesis; FAD biosynthesis; FAD from FMN: step 1/1. Catalyzes the transfer of the AMP portion of ATP to flavin mononucleotide (FMN) to produce flavin adenine dinucleotide (FAD) coenzyme. The polypeptide is FAD synthase (Methanohalophilus mahii (strain ATCC 35705 / DSM 5219 / SLP)).